We begin with the raw amino-acid sequence, 217 residues long: 3,4-dihydroxy-2-butanone 4-phosphate synthase (217 aa).

D-ribulose 5-phosphate is bound by residues 37–38 (RE), Asp-42, 150–154 (RRGHT), and Glu-174. Glu-38 contacts Mg(2+). His-153 lines the Mg(2+) pocket.

The protein belongs to the DHBP synthase family. Homodimer. Mg(2+) is required as a cofactor. Requires Mn(2+) as cofactor.

It catalyses the reaction D-ribulose 5-phosphate = (2S)-2-hydroxy-3-oxobutyl phosphate + formate + H(+). It participates in cofactor biosynthesis; riboflavin biosynthesis; 2-hydroxy-3-oxobutyl phosphate from D-ribulose 5-phosphate: step 1/1. Functionally, catalyzes the conversion of D-ribulose 5-phosphate to formate and 3,4-dihydroxy-2-butanone 4-phosphate. The polypeptide is 3,4-dihydroxy-2-butanone 4-phosphate synthase (Shewanella baltica (strain OS155 / ATCC BAA-1091)).